The sequence spans 100 residues: Noncompact myelin-associated protein (100 aa).

The Extracellular segment spans residues 1-28; it reads MTTATTLGDAVFSLNMTRGEDILYKSSG. The helical transmembrane segment at 29-49 threads the bilayer; the sequence is AIVAAIVVVVVIIVTLVLILL. Over 50–100 the chain is Cytoplasmic; it reads KMYNRRMRTRRELEPKSPKPPVPPALDPNSNGSQQPAAVTSDPADVPVETR. A disordered region spans residues 58-100; that stretch reads TRRELEPKSPKPPVPPALDPNSNGSQQPAAVTSDPADVPVETR. Positions 77-87 are enriched in polar residues; the sequence is PNSNGSQQPAA.

In terms of processing, glycosylated. In terms of tissue distribution, expressed in the peripheral nervous system Schwann cells (at protein level).

The protein localises to the cell membrane. Its function is as follows. Plays a role in myelin formation. The protein is Noncompact myelin-associated protein (Ncmap) of Rattus norvegicus (Rat).